Here is a 110-residue protein sequence, read N- to C-terminus: DNA-directed RNA polymerase subunit omega (110 aa).

Belongs to the RNA polymerase subunit omega family. The RNAP catalytic core consists of 2 alpha, 1 beta, 1 beta' and 1 omega subunit. When a sigma factor is associated with the core the holoenzyme is formed, which can initiate transcription.

It catalyses the reaction RNA(n) + a ribonucleoside 5'-triphosphate = RNA(n+1) + diphosphate. Promotes RNA polymerase assembly. Latches the N- and C-terminal regions of the beta' subunit thereby facilitating its interaction with the beta and alpha subunits. The protein is DNA-directed RNA polymerase subunit omega of Nocardioides sp. (strain ATCC BAA-499 / JS614).